The following is a 75-amino-acid chain: Exodeoxyribonuclease 7 small subunit (75 aa).

The protein belongs to the XseB family. Heterooligomer composed of large and small subunits.

Its subcellular location is the cytoplasm. It catalyses the reaction Exonucleolytic cleavage in either 5'- to 3'- or 3'- to 5'-direction to yield nucleoside 5'-phosphates.. Bidirectionally degrades single-stranded DNA into large acid-insoluble oligonucleotides, which are then degraded further into small acid-soluble oligonucleotides. The chain is Exodeoxyribonuclease 7 small subunit from Citrifermentans bemidjiense (strain ATCC BAA-1014 / DSM 16622 / JCM 12645 / Bem) (Geobacter bemidjiensis).